Consider the following 339-residue polypeptide: Transcription initiation factor IIB (339 aa).

The TFIIB-type zinc finger occupies 39–70; that stretch reads EELICPVCGSKSIIKDYERAEIVCEMCGCVLQ. Zn(2+)-binding residues include Cys43, Cys46, Cys62, and Cys65. 2 consecutive repeat copies span residues 156–239 and 250–331.

The protein belongs to the TFIIB family.

Its function is as follows. Stabilizes TBP binding to an archaeal box-A promoter. Also responsible for recruiting RNA polymerase II to the pre-initiation complex (DNA-TBP-TFIIB). The sequence is that of Transcription initiation factor IIB from Methanococcus maripaludis (strain C5 / ATCC BAA-1333).